Consider the following 68-residue polypeptide: Toxin Cg2 (68 aa).

Residues 1 to 66 (KDGYLVNKST…VYPIPGKTCS (66 aa)) enclose the LCN-type CS-alpha/beta domain. Intrachain disulfides connect Cys12–Cys65, Cys16–Cys41, Cys25–Cys46, and Cys29–Cys48.

This sequence belongs to the long (4 C-C) scorpion toxin superfamily. Sodium channel inhibitor family. As to expression, expressed by the venom gland.

The protein resides in the secreted. Its function is as follows. Binds to sodium channels (Nav) and inhibits them. This is Toxin Cg2 from Centruroides gracilis (Slenderbrown scorpion).